The following is a 635-amino-acid chain: DNA mismatch repair protein MutL (635 aa).

The segment at 359–399 (GTNKYAQPEAAKSSAAEQAVARERSSARERAAPAYKEDHPY) is disordered. Residues 364-377 (AQPEAAKSSAAEQA) show a composition bias toward low complexity. Positions 378 to 399 (VARERSSARERAAPAYKEDHPY) are enriched in basic and acidic residues.

This sequence belongs to the DNA mismatch repair MutL/HexB family.

Its function is as follows. This protein is involved in the repair of mismatches in DNA. It is required for dam-dependent methyl-directed DNA mismatch repair. May act as a 'molecular matchmaker', a protein that promotes the formation of a stable complex between two or more DNA-binding proteins in an ATP-dependent manner without itself being part of a final effector complex. This is DNA mismatch repair protein MutL from Yersinia pseudotuberculosis serotype O:1b (strain IP 31758).